The following is a 544-amino-acid chain: Chaperonin GroEL (544 aa).

ATP is bound by residues 30 to 33, Lys-51, 87 to 91, Gly-415, and Asp-495; these read TLGP and DGTTT.

Belongs to the chaperonin (HSP60) family. Forms a cylinder of 14 subunits composed of two heptameric rings stacked back-to-back. Interacts with the co-chaperonin GroES.

Its subcellular location is the cytoplasm. The catalysed reaction is ATP + H2O + a folded polypeptide = ADP + phosphate + an unfolded polypeptide.. Together with its co-chaperonin GroES, plays an essential role in assisting protein folding. The GroEL-GroES system forms a nano-cage that allows encapsulation of the non-native substrate proteins and provides a physical environment optimized to promote and accelerate protein folding. The polypeptide is Chaperonin GroEL (Aeromonas salmonicida (strain A449)).